The primary structure comprises 100 residues: Integration host factor subunit alpha (100 aa).

The protein belongs to the bacterial histone-like protein family. In terms of assembly, heterodimer of an alpha and a beta chain.

Its function is as follows. This protein is one of the two subunits of integration host factor, a specific DNA-binding protein that functions in genetic recombination as well as in transcriptional and translational control. The polypeptide is Integration host factor subunit alpha (Methylobacillus flagellatus (strain ATCC 51484 / DSM 6875 / VKM B-1610 / KT)).